We begin with the raw amino-acid sequence, 138 residues long: Ribonuclease kappa-A (138 aa).

Positions 1-24 (MVLYFSPVLTFFLANFFNSKSTTT) are cleaved as a signal peptide. Residues 25-75 (ENLQVFLVENQHRDSKRKINPTFSKKGIEVRQQNENLWSKIVALRFDYSVW) are Extracellular-facing. Residues 76-96 (GIIQLVLMMGLFFYINSVALI) form a helical membrane-spanning segment. The Cytoplasmic portion of the chain corresponds to 97–138 (EDLPIDEEFNSVEEFYTAATSAYNQNAYTVGLPVHLCAYASI).

It belongs to the RNase K family.

Its subcellular location is the membrane. Endoribonuclease. This Ceratitis capitata (Mediterranean fruit fly) protein is Ribonuclease kappa-A.